A 382-amino-acid polypeptide reads, in one-letter code: Layilin (382 aa).

Positions 1 to 21 are cleaved as a signal peptide; the sequence is MRPGTALQAVLLAVLLVGLRA. Topologically, residues 22-235 are extracellular; that stretch reads ATGRLLSASD…SREAALNLAY (214 aa). One can recognise a C-type lectin domain in the interval 45 to 185; the sequence is TQRPCYKVIY…CNMKNNFICK (141 aa). 2 disulfides stabilise this stretch: Cys-71/Cys-184 and Cys-150/Cys-176. An N-linked (GlcNAc...) asparagine glycan is attached at Asn-117. A helical membrane pass occupies residues 236–256; it reads ILIPSIPLLLLLVVTTVVCWV. Residues 257–382 lie on the Cytoplasmic side of the membrane; it reads WICRKRKREQ…GWVENEIYGY (126 aa). Positions 266 to 285 are disordered; sequence QPDPSTKKQHTIWPSPHQGN. 2 positions are modified to phosphoserine: Ser-286 and Ser-299. Positions 330-374 are interaction with NF2; the sequence is DYDNMAVNPSESGFVTLVSVESGFVTNDIYEFSPDQMGRSKESGW. Residues 337–382 form an interaction with TLN1 region; sequence NPSESGFVTLVSVESGFVTNDIYEFSPDQMGRSKESGWVENEIYGY. 5 consecutive repeat copies span residues 340-344, 350-354, 356-359, 371-375, and 377-380. Residues 340 to 375 are 3 X 5 AA repeats of E-S-G-X-V; that stretch reads ESGFVTLVSVESGFVTNDIYEFSPDQMGRSKESGWV. Residues 356–380 are 2 X 4 AA repeats of N-X-I-Y; that stretch reads NDIYEFSPDQMGRSKESGWVENEIY.

Interacts with NF2, RDX and TLN1.

It localises to the membrane. Receptor for hyaluronate. This is Layilin (LAYN) from Homo sapiens (Human).